Here is a 422-residue protein sequence, read N- to C-terminus: Aspartate--tRNA(Asp/Asn) ligase (422 aa).

Glu-158 provides a ligand contact to L-aspartate. Residues Gln-180–Lys-183 form an aspartate region. L-aspartate is bound at residue Arg-201. ATP contacts are provided by residues Arg-201 to Glu-203, Arg-209 to Leu-211, and Glu-345. Positions 348 and 352 each coordinate L-aspartate. An ATP-binding site is contributed by Gly-393–Arg-396.

Belongs to the class-II aminoacyl-tRNA synthetase family. Type 2 subfamily. In terms of assembly, homodimer. Makes part of a ribonucleoprotein particle (RNP) called transamidosome that allows channelling of the aa-tRNA from non-discriminating aspartyl-tRNA synthetase active site to the GatCAB amidotransferase site. The transamidosome complex is formed by two GatCABs, one dimeric ND-AspRSs and two tRNAs(Asn) molecules.

It localises to the cytoplasm. It catalyses the reaction tRNA(Asx) + L-aspartate + ATP = L-aspartyl-tRNA(Asx) + AMP + diphosphate. In terms of biological role, aspartyl-tRNA synthetase with relaxed tRNA specificity since it is able to aspartylate not only its cognate tRNA(Asp) but also tRNA(Asn) with similar efficiencies. Reaction proceeds in two steps: L-aspartate is first activated by ATP to form Asp-AMP and then transferred to the acceptor end of tRNA(Asp/Asn). This Thermus thermophilus (strain ATCC 27634 / DSM 579 / HB8) protein is Aspartate--tRNA(Asp/Asn) ligase (aspS2).